Here is a 355-residue protein sequence, read N- to C-terminus: WAT1-related protein At1g25270 (355 aa).

10 helical membrane-spanning segments follow: residues 4-24, 33-53, 65-85, 94-114, 134-154, 175-195, 207-227, 244-264, 272-292, and 297-317; these read VVAM…FKIT, VLVA…ALIF, LLLL…ILYL, TFSA…GLVF, LLGA…IHIW, VSIL…LWLL, LYWN…IIAL, LLAT…LVAW, LFVT…GSFA, and LHLG…LVVW. Residues 12 to 142 enclose the EamA 1 domain; that stretch reads FIFAGMFILF…TLLGACGALV (131 aa). The region spanning 210–316 is the EamA 2 domain; it reads NTSLMNGVGS…IMVGGVYLVV (107 aa).

It belongs to the drug/metabolite transporter (DMT) superfamily. Plant drug/metabolite exporter (P-DME) (TC 2.A.7.4) family.

The protein localises to the membrane. This chain is WAT1-related protein At1g25270, found in Arabidopsis thaliana (Mouse-ear cress).